The primary structure comprises 153 residues: Large ribosomal subunit protein uL13 (153 aa).

The protein belongs to the universal ribosomal protein uL13 family. In terms of assembly, part of the 50S ribosomal subunit.

Its function is as follows. This protein is one of the early assembly proteins of the 50S ribosomal subunit, although it is not seen to bind rRNA by itself. It is important during the early stages of 50S assembly. The sequence is that of Large ribosomal subunit protein uL13 from Azorhizobium caulinodans (strain ATCC 43989 / DSM 5975 / JCM 20966 / LMG 6465 / NBRC 14845 / NCIMB 13405 / ORS 571).